The sequence spans 507 residues: ATP synthase subunit alpha, chloroplastic (507 aa).

Gly-170–Thr-177 provides a ligand contact to ATP.

It belongs to the ATPase alpha/beta chains family. As to quaternary structure, F-type ATPases have 2 components, CF(1) - the catalytic core - and CF(0) - the membrane proton channel. CF(1) has five subunits: alpha(3), beta(3), gamma(1), delta(1), epsilon(1). CF(0) has four main subunits: a, b, b' and c.

It is found in the plastid. It localises to the chloroplast thylakoid membrane. It catalyses the reaction ATP + H2O + 4 H(+)(in) = ADP + phosphate + 5 H(+)(out). Produces ATP from ADP in the presence of a proton gradient across the membrane. The alpha chain is a regulatory subunit. In Panax ginseng (Korean ginseng), this protein is ATP synthase subunit alpha, chloroplastic.